A 316-amino-acid chain; its full sequence is tRNA-dihydrouridine(16) synthase (316 aa).

FMN contacts are provided by residues 7 to 9 (PME) and Gln-68. The active-site Proton donor is the Cys-98. FMN contacts are provided by residues Lys-139, 200 to 202 (NGE), and 224 to 225 (GR).

Belongs to the Dus family. DusC subfamily. It depends on FMN as a cofactor.

The enzyme catalyses 5,6-dihydrouridine(16) in tRNA + NADP(+) = uridine(16) in tRNA + NADPH + H(+). The catalysed reaction is 5,6-dihydrouridine(16) in tRNA + NAD(+) = uridine(16) in tRNA + NADH + H(+). Catalyzes the synthesis of 5,6-dihydrouridine (D), a modified base found in the D-loop of most tRNAs, via the reduction of the C5-C6 double bond in target uridines. Specifically modifies U16 in tRNAs. The sequence is that of tRNA-dihydrouridine(16) synthase from Escherichia coli O157:H7.